The chain runs to 371 residues: tRNA N6-adenosine threonylcarbamoyltransferase (371 aa).

Fe cation is bound by residues His110 and His114. Substrate-binding positions include 132 to 136 (LVSGG), Asp165, Gly178, Asp182, and Asn289. A Fe cation-binding site is contributed by Asp317.

The protein belongs to the KAE1 / TsaD family. It depends on Fe(2+) as a cofactor.

The protein resides in the cytoplasm. It catalyses the reaction L-threonylcarbamoyladenylate + adenosine(37) in tRNA = N(6)-L-threonylcarbamoyladenosine(37) in tRNA + AMP + H(+). Required for the formation of a threonylcarbamoyl group on adenosine at position 37 (t(6)A37) in tRNAs that read codons beginning with adenine. Is involved in the transfer of the threonylcarbamoyl moiety of threonylcarbamoyl-AMP (TC-AMP) to the N6 group of A37, together with TsaE and TsaB. TsaD likely plays a direct catalytic role in this reaction. This chain is tRNA N6-adenosine threonylcarbamoyltransferase, found in Solidesulfovibrio magneticus (strain ATCC 700980 / DSM 13731 / RS-1) (Desulfovibrio magneticus).